A 168-amino-acid chain; its full sequence is Lipoprotein signal peptidase (168 aa).

Transmembrane regions (helical) follow at residues 57–77 (PKEVMILLVGTISLLIALYVF) and 86–106 (FILPFALVFGGGVGNMIDRIT). Catalysis depends on residues D112 and D138. The helical transmembrane segment at 131 to 151 (WPIFNIADSAITIGACLLILF) threads the bilayer.

This sequence belongs to the peptidase A8 family.

Its subcellular location is the cell inner membrane. It catalyses the reaction Release of signal peptides from bacterial membrane prolipoproteins. Hydrolyzes -Xaa-Yaa-Zaa-|-(S,diacylglyceryl)Cys-, in which Xaa is hydrophobic (preferably Leu), and Yaa (Ala or Ser) and Zaa (Gly or Ala) have small, neutral side chains.. The protein operates within protein modification; lipoprotein biosynthesis (signal peptide cleavage). In terms of biological role, this protein specifically catalyzes the removal of signal peptides from prolipoproteins. In Chlorobium phaeobacteroides (strain DSM 266 / SMG 266 / 2430), this protein is Lipoprotein signal peptidase.